We begin with the raw amino-acid sequence, 94 residues long: uncharacterized protein (94 aa).

The next 2 membrane-spanning stretches (helical) occupy residues 9–29 (TLAKIVCTVTLITLYFYFFST) and 34–54 (LIELAVQMFFALIGLFWVFIV).

The protein resides in the cell membrane. This is an uncharacterized protein from Bacillus subtilis (strain 168).